We begin with the raw amino-acid sequence, 456 residues long: GTPase Der (456 aa).

EngA-type G domains are found at residues 4–169 and 177–352; these read PIVA…PAVE and IKVA…ESHK. GTP contacts are provided by residues 10 to 17, 57 to 61, 120 to 123, 183 to 190, 230 to 234, and 295 to 298; these read GRPNVGKS, DTGGL, NKCE, DTAGI, and NKWD. The 86-residue stretch at 353–438 folds into the KH-like domain; that stretch reads RRVSTSVINE…PIILLWRSKK (86 aa).

This sequence belongs to the TRAFAC class TrmE-Era-EngA-EngB-Septin-like GTPase superfamily. EngA (Der) GTPase family. In terms of assembly, associates with the 50S ribosomal subunit.

GTPase that plays an essential role in the late steps of ribosome biogenesis. In Nostoc punctiforme (strain ATCC 29133 / PCC 73102), this protein is GTPase Der.